A 192-amino-acid polypeptide reads, in one-letter code: Thymidine kinase (192 aa).

Residues 9–16 and 87–90 contribute to the ATP site; these read SAMNAGKS and DECQ. Catalysis depends on glutamate 88, which acts as the Proton acceptor. Residues cysteine 145, cysteine 147, cysteine 182, and histidine 185 each coordinate Zn(2+).

The protein belongs to the thymidine kinase family. In terms of assembly, homotetramer.

The protein resides in the cytoplasm. The enzyme catalyses thymidine + ATP = dTMP + ADP + H(+). The chain is Thymidine kinase from Vibrio vulnificus (strain CMCP6).